Reading from the N-terminus, the 61-residue chain is Photosystem II reaction center protein K (61 aa).

A propeptide spanning residues 1–24 (MLNIFNLICICFNSALFSSTFLVA) is cleaved from the precursor. Residues 40 to 60 (MPVIPLFFLLLAFVWQAAVSF) form a helical membrane-spanning segment.

It belongs to the PsbK family. PSII is composed of 1 copy each of membrane proteins PsbA, PsbB, PsbC, PsbD, PsbE, PsbF, PsbH, PsbI, PsbJ, PsbK, PsbL, PsbM, PsbT, PsbX, PsbY, PsbZ, Psb30/Ycf12, at least 3 peripheral proteins of the oxygen-evolving complex and a large number of cofactors. It forms dimeric complexes.

Its subcellular location is the plastid. It localises to the chloroplast thylakoid membrane. Its function is as follows. One of the components of the core complex of photosystem II (PSII). PSII is a light-driven water:plastoquinone oxidoreductase that uses light energy to abstract electrons from H(2)O, generating O(2) and a proton gradient subsequently used for ATP formation. It consists of a core antenna complex that captures photons, and an electron transfer chain that converts photonic excitation into a charge separation. The sequence is that of Photosystem II reaction center protein K from Sinapis alba (White mustard).